A 956-amino-acid polypeptide reads, in one-letter code: Translation initiation factor IF-2 (956 aa).

Positions 33 to 370 are disordered; that stretch reads SHASSVEEAD…PVTERKFHEL (338 aa). A compositionally biased stretch (polar residues) spans 46 to 60; that stretch reads IASSFSAGVTKNVQA. Residues 63 to 73 are compositionally biased toward basic and acidic residues; it reads AKDKQVAEQKA. Over residues 76-100 the composition is skewed to low complexity; it reads AKATTPQPAASKAAEKPAAATQEAS. Composition is skewed to basic and acidic residues over residues 112–125, 134–143, and 179–192; these read FKAE…EQVA, SNDRKSDYRQ, and NDGH…DKNR. Residues 199-213 show a composition bias toward low complexity; that stretch reads RQQDTGRQGQTQAGA. 2 stretches are compositionally biased toward basic and acidic residues: residues 234 to 258 and 266 to 276; these read ARQR…RQEA and QTEDKKHREAS. Residues 277-293 show a composition bias toward low complexity; sequence AKATESVASMAAASVAK. Basic and acidic residues predominate over residues 303 to 320; it reads NRPDKGHDRDHGLEDGQK. Residues 325 to 343 are compositionally biased toward low complexity; the sequence is SWNSQNQVRNQKNSNWNNN. A compositionally biased stretch (basic residues) spans 344–354; the sequence is KKNKKGKHHKN. The region spanning 457–626 is the tr-type G domain; it reads ERAPVVTIMG…LLVAEVEELK (170 aa). A G1 region spans residues 466-473; the sequence is GHVDHGKT. GTP is bound at residue 466–473; the sequence is GHVDHGKT. The tract at residues 491–495 is G2; the sequence is GITQH. A G3 region spans residues 512-515; it reads DTPG. GTP is bound by residues 512-516 and 566-569; these read DTPGH and NKID. The interval 566–569 is G4; that stretch reads NKID. The G5 stretch occupies residues 602 to 604; the sequence is SAK.

It belongs to the TRAFAC class translation factor GTPase superfamily. Classic translation factor GTPase family. IF-2 subfamily.

The protein resides in the cytoplasm. Functionally, one of the essential components for the initiation of protein synthesis. Protects formylmethionyl-tRNA from spontaneous hydrolysis and promotes its binding to the 30S ribosomal subunits. Also involved in the hydrolysis of GTP during the formation of the 70S ribosomal complex. The sequence is that of Translation initiation factor IF-2 from Streptococcus equi subsp. equi (strain 4047).